The primary structure comprises 346 residues: Phosphate acyltransferase (346 aa).

It belongs to the PlsX family. As to quaternary structure, homodimer. Probably interacts with PlsY.

The protein resides in the cytoplasm. The enzyme catalyses a fatty acyl-[ACP] + phosphate = an acyl phosphate + holo-[ACP]. It participates in lipid metabolism; phospholipid metabolism. Catalyzes the reversible formation of acyl-phosphate (acyl-PO(4)) from acyl-[acyl-carrier-protein] (acyl-ACP). This enzyme utilizes acyl-ACP as fatty acyl donor, but not acyl-CoA. The protein is Phosphate acyltransferase of Geotalea uraniireducens (strain Rf4) (Geobacter uraniireducens).